The primary structure comprises 129 residues: Trefoil factor 2 (129 aa).

The N-terminal stretch at 1–23 (MGPRGAPLLAVVLVLGLHALVEG) is a signal peptide. P-type domains follow at residues 29–73 (CRCS…FHPL) and 79–122 (EQCV…FFPQ). 7 disulfide bridges follow: Cys29–Cys127, Cys31–Cys58, Cys42–Cys57, Cys52–Cys69, Cys81–Cys107, Cys91–Cys106, and Cys101–Cys118.

Stomach and pancreas.

The protein resides in the secreted. Its function is as follows. Inhibits gastrointestinal motility and gastric acid secretion. Could function as a structural component of gastric mucus, possibly by stabilizing glycoproteins in the mucus gel through interactions with carbohydrate side chains. The chain is Trefoil factor 2 (Tff2) from Mus musculus (Mouse).